The primary structure comprises 249 residues: 2-C-methyl-D-erythritol 4-phosphate cytidylyltransferase (249 aa).

Belongs to the IspD/TarI cytidylyltransferase family. IspD subfamily.

It carries out the reaction 2-C-methyl-D-erythritol 4-phosphate + CTP + H(+) = 4-CDP-2-C-methyl-D-erythritol + diphosphate. Its pathway is isoprenoid biosynthesis; isopentenyl diphosphate biosynthesis via DXP pathway; isopentenyl diphosphate from 1-deoxy-D-xylulose 5-phosphate: step 2/6. Functionally, catalyzes the formation of 4-diphosphocytidyl-2-C-methyl-D-erythritol from CTP and 2-C-methyl-D-erythritol 4-phosphate (MEP). This Chromohalobacter salexigens (strain ATCC BAA-138 / DSM 3043 / CIP 106854 / NCIMB 13768 / 1H11) protein is 2-C-methyl-D-erythritol 4-phosphate cytidylyltransferase.